Consider the following 815-residue polypeptide: Subtilisin-like protease SBT2.5 (815 aa).

Positions 1–19 (MDIGLRIFVVFVLLVAVTA) are cleaved as a signal peptide. The Inhibitor I9 domain occupies 21 to 124 (VYIVTMEGDP…RSVDKDWKVR (104 aa)). A Peptidase S8 domain is found at 120–671 (DWKVRRLTTH…SGHVNPSAAL (552 aa)). Active-site charge relay system residues include aspartate 160 and histidine 234. Residues 397–501 (TLVSANDVLL…VSKSMDLIDY (105 aa)) enclose the PA domain. N-linked (GlcNAc...) asparagine glycosylation is found at asparagine 503 and asparagine 577. Catalysis depends on serine 596, which acts as the Charge relay system. Asparagine 701 is a glycosylation site (N-linked (GlcNAc...) asparagine).

The protein belongs to the peptidase S8 family. As to expression, expressed in roots, leaves and flowers of mature plants.

The chain is Subtilisin-like protease SBT2.5 from Arabidopsis thaliana (Mouse-ear cress).